The sequence spans 574 residues: Calcium-dependent protein kinase 9 (574 aa).

The disordered stretch occupies residues 1–64 (MGNTCCVAPA…RARAKPNPYD (64 aa)). The N-myristoyl glycine moiety is linked to residue glycine 2. Over residues 28-40 (KSPAPSATTTTAT) the composition is skewed to low complexity. One can recognise a Protein kinase domain in the interval 101 to 359 (YQLGRELGRG…AQQVLDHPWL (259 aa)). ATP is bound by residues 107 to 115 (LGRGEFGVT) and lysine 130. Residue aspartate 225 is the Proton acceptor of the active site. The autoinhibitory domain stretch occupies residues 365 to 395 (APNVPLGDVVRARLKQFSLMNRLKKKAMRVI). EF-hand domains are found at residues 402 to 437 (EEVEVIKDMFALMDTDNNGRVTLQELKDGLTKVGSK), 438 to 473 (LAEPEMELLMEAADVDGNGYLDYGEFVAVTIHLQRL), 474 to 509 (SNDNHLRTAFLFFDKDGSGYIDRAELADALADDSGH), and 510 to 545 (ADDAVLDHILREVDTDKDGRISYEEFVAMMKSGTDW). The Ca(2+) site is built by aspartate 415, aspartate 417, asparagine 419, arginine 421, glutamate 426, aspartate 451, aspartate 453, asparagine 455, tyrosine 457, glutamate 462, aspartate 487, aspartate 489, serine 491, tyrosine 493, glutamate 498, aspartate 523, aspartate 525, aspartate 527, arginine 529, and glutamate 534.

The protein belongs to the protein kinase superfamily. Ser/Thr protein kinase family. CDPK subfamily. As to expression, expressed in leaf blades and stems. Expressed at low levels in anthers and spikelets.

The protein localises to the membrane. It catalyses the reaction L-seryl-[protein] + ATP = O-phospho-L-seryl-[protein] + ADP + H(+). It carries out the reaction L-threonyl-[protein] + ATP = O-phospho-L-threonyl-[protein] + ADP + H(+). Activated by calcium. Autophosphorylation may play an important role in the regulation of the kinase activity. Functionally, may play a role in signal transduction pathways that involve calcium as a second messenger. Functions in signal transduction pathways that positively regulate responses to drought, osmotic, and dehydration stress. Regulates expression of stress-associated genes in response to drought. Involved in tolerance to drought stress by increasing proline and soluble sugars, and improving stomatal closure. Required for pollen maturation and spikelet fertility. This is Calcium-dependent protein kinase 9 from Oryza sativa subsp. japonica (Rice).